Reading from the N-terminus, the 437-residue chain is Cobyrinate a,c-diamide synthase (437 aa).

In terms of domain architecture, GATase cobBQ-type spans 241–430; it reads KIAVAKDEAF…AHVHFFGNLD (190 aa). The Nucleophile role is filled by cysteine 323.

It belongs to the CobB/CbiA family. It depends on Mg(2+) as a cofactor.

The enzyme catalyses cob(II)yrinate + 2 L-glutamine + 2 ATP + 2 H2O = cob(II)yrinate a,c diamide + 2 L-glutamate + 2 ADP + 2 phosphate + 2 H(+). It participates in cofactor biosynthesis; adenosylcobalamin biosynthesis; cob(II)yrinate a,c-diamide from sirohydrochlorin (anaerobic route): step 10/10. In terms of biological role, catalyzes the ATP-dependent amidation of the two carboxylate groups at positions a and c of cobyrinate, using either L-glutamine or ammonia as the nitrogen source. In Clostridium acetobutylicum (strain ATCC 824 / DSM 792 / JCM 1419 / IAM 19013 / LMG 5710 / NBRC 13948 / NRRL B-527 / VKM B-1787 / 2291 / W), this protein is Cobyrinate a,c-diamide synthase.